A 462-amino-acid polypeptide reads, in one-letter code: A-type ATP synthase subunit B (462 aa).

Belongs to the ATPase alpha/beta chains family. Has multiple subunits with at least A(3), B(3), C, D, E, F, H, I and proteolipid K(x).

It is found in the cell membrane. Component of the A-type ATP synthase that produces ATP from ADP in the presence of a proton gradient across the membrane. The B chain is a regulatory subunit. The polypeptide is A-type ATP synthase subunit B (Methanococcus maripaludis (strain C6 / ATCC BAA-1332)).